The following is a 129-amino-acid chain: Small ribosomal subunit protein uS11 (129 aa).

Belongs to the universal ribosomal protein uS11 family. As to quaternary structure, part of the 30S ribosomal subunit. Interacts with proteins S7 and S18. Binds to IF-3.

Its function is as follows. Located on the platform of the 30S subunit, it bridges several disparate RNA helices of the 16S rRNA. Forms part of the Shine-Dalgarno cleft in the 70S ribosome. This is Small ribosomal subunit protein uS11 from Brucella abortus (strain S19).